The primary structure comprises 541 residues: Chaperonin GroEL 2 (541 aa).

Residues 29–32 (TLGP), 86–90 (DGTTT), G413, 476–478 (NAA), and D492 contribute to the ATP site.

Belongs to the chaperonin (HSP60) family. In terms of assembly, forms a cylinder of 14 subunits composed of two heptameric rings stacked back-to-back. Interacts with the co-chaperonin GroES.

Its subcellular location is the secreted. The protein localises to the capsule. It localises to the cell surface. It is found in the cell wall. The catalysed reaction is ATP + H2O + a folded polypeptide = ADP + phosphate + an unfolded polypeptide.. Together with its co-chaperonin GroES, plays an essential role in assisting protein folding. The GroEL-GroES system forms a nano-cage that allows encapsulation of the non-native substrate proteins and provides a physical environment optimized to promote and accelerate protein folding. The sequence is that of Chaperonin GroEL 2 from Mycobacterium sp. (strain KMS).